Reading from the N-terminus, the 143-residue chain is MSIIKEFKEFAVKGNVMDLAVGVIIGGAFSKIVDSVVKDLIMPVIGVLTGGLDFSNKFVLLGTIPPTFKGNPDSFKDLQAAGVAAFGYGSFITVAINFVILAFIIFLMVKFINKLRKPEEAAPAATPEDTVLLREIRDSLKQR.

A run of 2 helical transmembrane segments spans residues 10–30 (FAVK…GAFS) and 89–109 (GSFI…FLMV).

This sequence belongs to the MscL family. As to quaternary structure, homopentamer.

It localises to the cell inner membrane. Channel that opens in response to stretch forces in the membrane lipid bilayer. May participate in the regulation of osmotic pressure changes within the cell. In Burkholderia cenocepacia (strain ATCC BAA-245 / DSM 16553 / LMG 16656 / NCTC 13227 / J2315 / CF5610) (Burkholderia cepacia (strain J2315)), this protein is Large-conductance mechanosensitive channel.